Reading from the N-terminus, the 297-residue chain is Glycine--tRNA ligase alpha subunit (297 aa).

This sequence belongs to the class-II aminoacyl-tRNA synthetase family. As to quaternary structure, tetramer of two alpha and two beta subunits.

The protein resides in the cytoplasm. It carries out the reaction tRNA(Gly) + glycine + ATP = glycyl-tRNA(Gly) + AMP + diphosphate. This is Glycine--tRNA ligase alpha subunit (glyQ) from Halalkalibacterium halodurans (strain ATCC BAA-125 / DSM 18197 / FERM 7344 / JCM 9153 / C-125) (Bacillus halodurans).